Consider the following 498-residue polypeptide: ATP synthase subunit beta, chloroplastic (498 aa).

172–179 (GGAGVGKT) is an ATP binding site.

The protein belongs to the ATPase alpha/beta chains family. As to quaternary structure, F-type ATPases have 2 components, CF(1) - the catalytic core - and CF(0) - the membrane proton channel. CF(1) has five subunits: alpha(3), beta(3), gamma(1), delta(1), epsilon(1). CF(0) has four main subunits: a(1), b(1), b'(1) and c(9-12).

The protein resides in the plastid. The protein localises to the chloroplast thylakoid membrane. It carries out the reaction ATP + H2O + 4 H(+)(in) = ADP + phosphate + 5 H(+)(out). Produces ATP from ADP in the presence of a proton gradient across the membrane. The catalytic sites are hosted primarily by the beta subunits. This chain is ATP synthase subunit beta, chloroplastic, found in Montinia caryophyllacea (Wild clove bush).